Consider the following 331-residue polypeptide: 4-hydroxy-3-methylbut-2-enyl diphosphate reductase (331 aa).

Position 12 (cysteine 12) interacts with [4Fe-4S] cluster. Residues histidine 43 and histidine 81 each contribute to the (2E)-4-hydroxy-3-methylbut-2-enyl diphosphate site. Dimethylallyl diphosphate-binding residues include histidine 43 and histidine 81. Positions 43 and 81 each coordinate isopentenyl diphosphate. Residue cysteine 103 participates in [4Fe-4S] cluster binding. A (2E)-4-hydroxy-3-methylbut-2-enyl diphosphate-binding site is contributed by histidine 131. Histidine 131 is a dimethylallyl diphosphate binding site. Residue histidine 131 participates in isopentenyl diphosphate binding. Glutamate 133 functions as the Proton donor in the catalytic mechanism. Position 170 (threonine 170) interacts with (2E)-4-hydroxy-3-methylbut-2-enyl diphosphate. Cysteine 198 contacts [4Fe-4S] cluster. (2E)-4-hydroxy-3-methylbut-2-enyl diphosphate is bound by residues serine 226, asparagine 228, and serine 271. Dimethylallyl diphosphate contacts are provided by serine 226, asparagine 228, and serine 271. Positions 226, 228, and 271 each coordinate isopentenyl diphosphate.

This sequence belongs to the IspH family. [4Fe-4S] cluster is required as a cofactor.

It catalyses the reaction isopentenyl diphosphate + 2 oxidized [2Fe-2S]-[ferredoxin] + H2O = (2E)-4-hydroxy-3-methylbut-2-enyl diphosphate + 2 reduced [2Fe-2S]-[ferredoxin] + 2 H(+). The catalysed reaction is dimethylallyl diphosphate + 2 oxidized [2Fe-2S]-[ferredoxin] + H2O = (2E)-4-hydroxy-3-methylbut-2-enyl diphosphate + 2 reduced [2Fe-2S]-[ferredoxin] + 2 H(+). The protein operates within isoprenoid biosynthesis; dimethylallyl diphosphate biosynthesis; dimethylallyl diphosphate from (2E)-4-hydroxy-3-methylbutenyl diphosphate: step 1/1. It participates in isoprenoid biosynthesis; isopentenyl diphosphate biosynthesis via DXP pathway; isopentenyl diphosphate from 1-deoxy-D-xylulose 5-phosphate: step 6/6. Catalyzes the conversion of 1-hydroxy-2-methyl-2-(E)-butenyl 4-diphosphate (HMBPP) into a mixture of isopentenyl diphosphate (IPP) and dimethylallyl diphosphate (DMAPP). Acts in the terminal step of the DOXP/MEP pathway for isoprenoid precursor biosynthesis. The chain is 4-hydroxy-3-methylbut-2-enyl diphosphate reductase from Listeria monocytogenes serovar 1/2a (strain ATCC BAA-679 / EGD-e).